A 1280-amino-acid chain; its full sequence is E3 ubiquitin-protein ligase RKP (1280 aa).

The 188-residue stretch at 82 to 269 folds into the B30.2/SPRY domain; the sequence is KLHGDLDVSV…CELNFGAYPF (188 aa). The helical transmembrane segment at 551 to 571 threads the bilayer; that stretch reads SVLVSLFSVILHFLSEGFAML. Residues 669-719 are disordered; that stretch reads DRGKNTAQSSRGRCSSIPERSSHVAAECSAGSFSEEIDDKPSTSNQSDPDF. A helical membrane pass occupies residues 834 to 854; the sequence is ALCMWVVQLLLVLSKMDSVFV. The RING-type zinc-finger motif lies at 1217 to 1252; sequence CCICYAGEANAMIAPCSHRSCYGCITRHLLNCQRCF.

The protein resides in the membrane. The enzyme catalyses S-ubiquitinyl-[E2 ubiquitin-conjugating enzyme]-L-cysteine + [acceptor protein]-L-lysine = [E2 ubiquitin-conjugating enzyme]-L-cysteine + N(6)-ubiquitinyl-[acceptor protein]-L-lysine.. E3 ubiquitin-protein ligase that promotes the ubiquitination and proteasomal degradation of KRP1 and KRP2. The sequence is that of E3 ubiquitin-protein ligase RKP (RKP) from Arabidopsis thaliana (Mouse-ear cress).